Reading from the N-terminus, the 815-residue chain is MANQAESSDSKGTKKDFSTAILEKKKAANRLVVDEAINDDNSVVSLHPDTMEKLQLFRGDTILIKGKKRKDTVCIALADETCDEPKIRMNKVVRSNLRVRLGDVISVHQCPDVKYGNRVHILPLDDTIEGVSGNIFDAYLKPYFLEAYRPVRKGDLFLVRGGMRSIEFKVIETDPAEYCVVAPDTEIFCEGEPIKREDEERLDEVGYDDVGGVRKQMAQIRELVELPLRHPQLFKSIGVKPPKGILLYGPPGSGKTLIARAVANETGAFFFCINGPEIMSKLAGESESNLRKAFEEAEKNAPSIIFIDEIDSIAPKREKTHGEVERRIVSQLLTLMDGLKSRAHVIVMGATNRPNSIDPALRRFGRFDREIDIGVPDEIGRLEVLRIHTKNMKLAEDVDLERVSKDTHGYVGADLAALCTEAALQCIREKMDVIDLDDEEIDAEILNSMAVSNDHFQTALGNSNPSALRETVVEVPNVSWEDIGGLENVKRELQETVQYPVEHPEKFEKFGMSPSKGVLFYGPPGCGKTLLAKAIANECQANFISIKGPELLTMWFGESEANVREIFDKARQSAPCVLFFDELDSIATQRGNSVGDAGGAADRVLNQLLTEMDGMNAKKTVFIIGATNRPDIIDPALLRPGRLDQLIYIPLPDEESRYQIFKSCLRKSPVAKDVDLRALAKYTQGFSGADITEICQRSCKYAIRENIEKDIEKERKRAESPEAMEEDEEEIAEIKAGHFEESMKYARRSVSDADIRKYQAFAQTLQQSRGFGSEFRFPDAPTGTTGAFPGAAATVGGVDPFATSGGAADDDDLYS.

N-acetylalanine is present on Ala2. Ser42 carries the phosphoserine modification. ATP-binding positions include 249 to 256 and 522 to 529; these read GPPGSGKT and GPPGCGKT. Phosphoserine is present on Ser720. The interval 772-815 is disordered; sequence GSEFRFPDAPTGTTGAFPGAAATVGGVDPFATSGGAADDDDLYS. Positions 780 to 798 are enriched in low complexity; the sequence is APTGTTGAFPGAAATVGGV.

It belongs to the AAA ATPase family.

It is found in the nucleus. The protein localises to the cytoplasm. Its subcellular location is the cytoskeleton. It localises to the phragmoplast. Functionally, probably functions in cell division and growth processes. Interacts with certain SNAREs as part of specialized membrane fusion events where vesicles from the same organelle fuse (homotypic fusion). The polypeptide is Cell division control protein 48 homolog D (CDC48D) (Arabidopsis thaliana (Mouse-ear cress)).